A 315-amino-acid polypeptide reads, in one-letter code: Ribosomal RNA small subunit methyltransferase H (315 aa).

S-adenosyl-L-methionine-binding positions include 37–39, aspartate 57, phenylalanine 83, aspartate 105, and glutamine 112; that span reads GGH.

Belongs to the methyltransferase superfamily. RsmH family.

It is found in the cytoplasm. It carries out the reaction cytidine(1402) in 16S rRNA + S-adenosyl-L-methionine = N(4)-methylcytidine(1402) in 16S rRNA + S-adenosyl-L-homocysteine + H(+). Specifically methylates the N4 position of cytidine in position 1402 (C1402) of 16S rRNA. This chain is Ribosomal RNA small subunit methyltransferase H, found in Pseudomonas fluorescens (strain ATCC BAA-477 / NRRL B-23932 / Pf-5).